We begin with the raw amino-acid sequence, 533 residues long: MSIQVEHPAGGYKKLFETVEELSSPLTAHVTGRIPLWLTGSLLRCGPGLFEVGSEPFYHLFDGQALLHKFDFKEGHVTYHRRFIRTDAYVRAMTEKRIVITEFGTCAFPDPCKNIFSRFFSYFRGVEVTDNALVNVYPVGEDYYACTETNFITKINPETLETIKQVDLCNYVSVNGATAHPHIENDGTVYNIGNCFGKNFSIAYNIVKIPPLQADKEDPISKSEIVVQFPCSDRFKPSYVHSFGLTPNYIVFVETPVKINLFKFLSSWSLWGANYMDCFESNETMGVWLHIADKKRKKYLNNKYRTSPFNLFHHINTYEDNGFLIVDLCCWKGFEFVYNYLYLANLRENWEEVKKNARKAPQPEVRRYVLPLNIDKADTGKNLITLPNTTATAILCSEETIWLEPEVLFSGPRQAFEFPQINYQKYCGKPYTYAYGLGLNHFVPDRLCKLNVKTKETWVWQEPDSYPSEPIFVSHPDALEEDDGVVLSVVVSPGAGQKPAYLLILNAKDLSEVARAEVEINIPVTFHGLFKKS.

The residue at position 2 (Ser-2) is an N-acetylserine. Thr-101 and Thr-105 each carry phosphothreonine. Cys-112 is lipidated: S-palmitoyl cysteine; in membrane form. N6-acetyllysine is present on Lys-113. Residue Ser-117 is modified to Phosphoserine. Position 180 (His-180) interacts with Fe cation. Cys-231 carries the S-palmitoyl cysteine; in membrane form lipid modification. Fe cation-binding residues include His-241 and His-313. 2 S-palmitoyl cysteine; in membrane form lipidation sites follow: Cys-329 and Cys-330. His-527 contributes to the Fe cation binding site.

This sequence belongs to the carotenoid oxygenase family. As to quaternary structure, interacts with MYO7A; this mediates light-dependent intracellular transport of RPE65. Fe(2+) serves as cofactor. Post-translationally, palmitoylation by LRAT regulates ligand binding specificity; the palmitoylated form (membrane form) specifically binds all-trans-retinyl-palmitate, while the soluble unpalmitoylated form binds all-trans-retinol (vitamin A). As to expression, retinal pigment epithelium specific.

The protein localises to the cytoplasm. Its subcellular location is the cell membrane. The protein resides in the microsome membrane. It catalyses the reaction an all-trans-retinyl ester + H2O = 11-cis-retinol + a fatty acid + H(+). The catalysed reaction is lutein = (3R,3'S)-zeaxanthin. It carries out the reaction all-trans-retinyl hexadecanoate + H2O = 11-cis-retinol + hexadecanoate + H(+). Functionally, critical isomerohydrolase in the retinoid cycle involved in regeneration of 11-cis-retinal, the chromophore of rod and cone opsins. Catalyzes the cleavage and isomerization of all-trans-retinyl fatty acid esters to 11-cis-retinol which is further oxidized by 11-cis retinol dehydrogenase to 11-cis-retinal for use as visual chromophore. Essential for the production of 11-cis retinal for both rod and cone photoreceptors. Also capable of catalyzing the isomerization of lutein to meso-zeaxanthin an eye-specific carotenoid. The soluble form binds vitamin A (all-trans-retinol), making it available for LRAT processing to all-trans-retinyl ester. The membrane form, palmitoylated by LRAT, binds all-trans-retinyl esters, making them available for IMH (isomerohydrolase) processing to all-cis-retinol. The soluble form is regenerated by transferring its palmitoyl groups onto 11-cis-retinol, a reaction catalyzed by LRAT. This chain is Retinoid isomerohydrolase (RPE65), found in Chlorocebus aethiops (Green monkey).